Reading from the N-terminus, the 296-residue chain is Nucleotide-binding protein SEQ_0857 (296 aa).

An ATP-binding site is contributed by 13-20; the sequence is GMSGAGKT. 63 to 66 contributes to the GTP binding site; that stretch reads DMRS.

The protein belongs to the RapZ-like family.

Displays ATPase and GTPase activities. The sequence is that of Nucleotide-binding protein SEQ_0857 from Streptococcus equi subsp. equi (strain 4047).